The primary structure comprises 132 residues: Fatty acid-binding protein, brain (132 aa).

Residue Val-2 is modified to N-acetylvaline. 127-129 (RHY) contributes to the a fatty acid binding site.

It belongs to the calycin superfamily. Fatty-acid binding protein (FABP) family.

The protein resides in the cytoplasm. Functionally, FABPs are thought to play a role in the intracellular transport of long-chain fatty acids and their acyl-CoA esters. This is Fatty acid-binding protein, brain (FABP7) from Gallus gallus (Chicken).